A 310-amino-acid chain; its full sequence is tRNA pseudouridine synthase B (310 aa).

D49 (nucleophile) is an active-site residue.

This sequence belongs to the pseudouridine synthase TruB family. Type 1 subfamily.

The enzyme catalyses uridine(55) in tRNA = pseudouridine(55) in tRNA. Responsible for synthesis of pseudouridine from uracil-55 in the psi GC loop of transfer RNAs. This chain is tRNA pseudouridine synthase B, found in Sinorhizobium medicae (strain WSM419) (Ensifer medicae).